The sequence spans 243 residues: Ubiquinone/menaquinone biosynthesis C-methyltransferase UbiE (243 aa).

Residues threonine 69, aspartate 90, and 116–117 (DA) contribute to the S-adenosyl-L-methionine site.

The protein belongs to the class I-like SAM-binding methyltransferase superfamily. MenG/UbiE family.

It carries out the reaction a 2-demethylmenaquinol + S-adenosyl-L-methionine = a menaquinol + S-adenosyl-L-homocysteine + H(+). The catalysed reaction is a 2-methoxy-6-(all-trans-polyprenyl)benzene-1,4-diol + S-adenosyl-L-methionine = a 5-methoxy-2-methyl-3-(all-trans-polyprenyl)benzene-1,4-diol + S-adenosyl-L-homocysteine + H(+). The protein operates within quinol/quinone metabolism; menaquinone biosynthesis; menaquinol from 1,4-dihydroxy-2-naphthoate: step 2/2. Its pathway is cofactor biosynthesis; ubiquinone biosynthesis. Functionally, methyltransferase required for the conversion of demethylmenaquinol (DMKH2) to menaquinol (MKH2) and the conversion of 2-polyprenyl-6-methoxy-1,4-benzoquinol (DDMQH2) to 2-polyprenyl-3-methyl-6-methoxy-1,4-benzoquinol (DMQH2). This Burkholderia cenocepacia (strain ATCC BAA-245 / DSM 16553 / LMG 16656 / NCTC 13227 / J2315 / CF5610) (Burkholderia cepacia (strain J2315)) protein is Ubiquinone/menaquinone biosynthesis C-methyltransferase UbiE.